The chain runs to 509 residues: Leucine-rich repeat-containing protein 14 (509 aa).

An LRR 1; degenerate repeat occupies 111–146; that stretch reads RQRLRLLDMTGMQEEGLEQNPDTMSLWSRTVTLAKA. The LRR 2; degenerate repeat unit spans residues 210–234; it reads RLQCRDFRAEELSLRSTAGLLELLN. An LRR 3; degenerate repeat occupies 235-262; it reads PGSVRQIDLRFNNLGLSGLNVLLPHMAK. Residues 263–298 form an LRR 4; degenerate repeat; sequence FSHLQSLKLPYSNVDVRRLSPVMEEGLQSFASQLGQ. LRR repeat units lie at residues 299 to 323, 324 to 355, 356 to 374, 380 to 407, and 408 to 432; these read LGAL…LGGL, QRPL…SSLR, KLDL…PFLH, SGHL…ILCR, and CSWL…VLQN.

Belongs to the PRAME family. LRRC14 subfamily.

Its subcellular location is the cytoplasm. This Xenopus laevis (African clawed frog) protein is Leucine-rich repeat-containing protein 14.